The sequence spans 481 residues: uncharacterized protein (481 aa).

10 helical membrane passes run 32–52 (LSWL…YWGV), 82–102 (FFHW…IMAY), 137–157 (MFLI…AATF), 173–193 (VQAF…WIGI), 204–224 (VGWG…TEFI), 258–278 (WTVF…MFVT), 289–309 (VIWG…GVME), 348–368 (LFLA…MDAV), 392–412 (LFWC…GASL), and 418–438 (TVVL…GGFI).

This sequence belongs to the BCCT transporter (TC 2.A.15) family.

The protein localises to the cell inner membrane. Probable transporter whose substrate is unknown. Is not involved in aerobic D-malate transport. This is an uncharacterized protein from Escherichia coli (strain K12).